The following is a 482-amino-acid chain: Immune evasion protein OPG047 (482 aa).

The region spanning 20 to 90 (KKFKTIIEAI…SYTGKVYIDS (71 aa)) is the BTB domain. Residues 125–222 (CIECYMMGIE…SNYLSPRGIH (98 aa)) enclose the BACK domain. Kelch repeat units follow at residues 273 to 319 (VVYL…PANN), 320 to 363 (KLYV…SINN), 365 to 408 (IYVM…VFGR), 410 to 447 (LFLV…IVDN), and 448 to 482 (KLLL…GMEW).

The protein belongs to the orthopoxvirus OPG047 family.

Functionally, might have a role in the suppression of host immune response. The sequence is that of Immune evasion protein OPG047 (OPG047) from Cynomys gunnisoni (Gunnison's prairie dog).